Reading from the N-terminus, the 550-residue chain is Carboxylesterase 4A (550 aa).

The N-terminal stretch at Met1–Gly20 is a signal peptide. An intrachain disulfide couples Cys88 to Cys116. The active-site Acyl-ester intermediate is Ser221. Cys273 and Cys284 are joined by a disulfide. A glycan (N-linked (GlcNAc...) asparagine) is linked at Asn276. Glu353 (charge relay system) is an active-site residue. The N-linked (GlcNAc...) asparagine glycan is linked to Asn386. The active-site Charge relay system is the His465.

It belongs to the type-B carboxylesterase/lipase family.

Its subcellular location is the secreted. Probable carboxylesterase. The polypeptide is Carboxylesterase 4A (CES4A) (Bos taurus (Bovine)).